The chain runs to 364 residues: Chorismate synthase (364 aa).

R48 serves as a coordination point for NADP(+). FMN contacts are provided by residues R131–S133, N243–A244, G288, K303–S307, and R329.

Belongs to the chorismate synthase family. In terms of assembly, homotetramer. FMNH2 is required as a cofactor.

The enzyme catalyses 5-O-(1-carboxyvinyl)-3-phosphoshikimate = chorismate + phosphate. It functions in the pathway metabolic intermediate biosynthesis; chorismate biosynthesis; chorismate from D-erythrose 4-phosphate and phosphoenolpyruvate: step 7/7. Functionally, catalyzes the anti-1,4-elimination of the C-3 phosphate and the C-6 proR hydrogen from 5-enolpyruvylshikimate-3-phosphate (EPSP) to yield chorismate, which is the branch point compound that serves as the starting substrate for the three terminal pathways of aromatic amino acid biosynthesis. This reaction introduces a second double bond into the aromatic ring system. The chain is Chorismate synthase from Brucella anthropi (strain ATCC 49188 / DSM 6882 / CCUG 24695 / JCM 21032 / LMG 3331 / NBRC 15819 / NCTC 12168 / Alc 37) (Ochrobactrum anthropi).